The following is a 372-amino-acid chain: MLDIQQLVKTYENGHQAVKGVDLAIHQGEFIVLVGPSGCGKSSILRSIAGLEAITSGEIHLAGRRVDNEKPANRDIAMVFQNYALYPHMSVYDNLAYGLKNRGVSKATIAEKIAKVAKTLKIEEYLDRKPAKLSGGQRQRVAMGRAIVRDPQLFLFDEPLSNLDAALRAHMRLEIKKLQRELGVTSVYVTHDQVEAMTLADRIVVLKQGEIEQIGTPAEVYHQPASTFVASFIGSPAMNFLAASISDGKLQLAGKQWSVPYDANLNCNTLTLGIRPEHASLHPVDDAIELSLNIQVVEPLGPNQLVHGKINGEYGDEDFIAVTAEMPLTIGDNLPIWVRVEQLHLFDEQEKRIPISAQSPSVDTHQQQRQQQ.

In terms of domain architecture, ABC transporter spans 2 to 233; the sequence is LDIQQLVKTY…PASTFVASFI (232 aa). 35–42 serves as a coordination point for ATP; it reads GPSGCGKS.

It belongs to the ABC transporter superfamily. sn-glycerol-3-phosphate importer (TC 3.A.1.1.3) family. As to quaternary structure, the complex is composed of two ATP-binding proteins (UgpC), two transmembrane proteins (UgpA and UgpE) and a solute-binding protein (UgpB).

Its subcellular location is the cell inner membrane. The catalysed reaction is sn-glycerol 3-phosphate(out) + ATP + H2O = sn-glycerol 3-phosphate(in) + ADP + phosphate + H(+). Functionally, part of the ABC transporter complex UgpBAEC involved in sn-glycerol-3-phosphate (G3P) import. Responsible for energy coupling to the transport system. In Vibrio vulnificus (strain YJ016), this protein is sn-glycerol-3-phosphate import ATP-binding protein UgpC.